Reading from the N-terminus, the 170-residue chain is Lipocalin Cav p 2.0101 (170 aa).

An N-terminal signal peptide occupies residues 1 to 16 (MMQILLLALAVSLACA). Intrachain disulfides connect cysteine 56–cysteine 60 and cysteine 75–cysteine 168.

Belongs to the calycin superfamily. Lipocalin family. Post-translationally, not N-linked glycosylated. In terms of tissue distribution, expressed in harderian gland (at protein level). Expressed in hair (at protein level). Expressed in submaxillary gland and harderian gland.

Its subcellular location is the secreted. The sequence is that of Lipocalin Cav p 2.0101 (Lcncavp2) from Cavia porcellus (Guinea pig).